The primary structure comprises 166 residues: Peptide methionine sulfoxide reductase MsrA (166 aa).

Cysteine 11 is a catalytic residue.

This sequence belongs to the MsrA Met sulfoxide reductase family.

It carries out the reaction L-methionyl-[protein] + [thioredoxin]-disulfide + H2O = L-methionyl-(S)-S-oxide-[protein] + [thioredoxin]-dithiol. The catalysed reaction is [thioredoxin]-disulfide + L-methionine + H2O = L-methionine (S)-S-oxide + [thioredoxin]-dithiol. Has an important function as a repair enzyme for proteins that have been inactivated by oxidation. Catalyzes the reversible oxidation-reduction of methionine sulfoxide in proteins to methionine. This Mycoplasmopsis pulmonis (strain UAB CTIP) (Mycoplasma pulmonis) protein is Peptide methionine sulfoxide reductase MsrA.